Reading from the N-terminus, the 164-residue chain is UPF0304 protein YfbU (164 aa).

This sequence belongs to the UPF0304 family.

The sequence is that of UPF0304 protein YfbU from Escherichia coli O139:H28 (strain E24377A / ETEC).